We begin with the raw amino-acid sequence, 214 residues long: 3-isopropylmalate dehydratase small subunit (214 aa).

Belongs to the LeuD family. LeuD type 1 subfamily. As to quaternary structure, heterodimer of LeuC and LeuD.

It catalyses the reaction (2R,3S)-3-isopropylmalate = (2S)-2-isopropylmalate. It functions in the pathway amino-acid biosynthesis; L-leucine biosynthesis; L-leucine from 3-methyl-2-oxobutanoate: step 2/4. Its function is as follows. Catalyzes the isomerization between 2-isopropylmalate and 3-isopropylmalate, via the formation of 2-isopropylmaleate. The polypeptide is 3-isopropylmalate dehydratase small subunit (Pseudomonas entomophila (strain L48)).